The following is a 421-amino-acid chain: Autophagy-related protein 17 (421 aa).

This sequence belongs to the ATG17 family. In terms of assembly, forms a complex with ATG13, ATG29 and CIS1/ATG31. The ATG17-ATG29-ATG31 complex interacts with the ATG1-ATG13 complex. Forms a complex with SNX4 and ATG20. Interacts with ATG11.

The protein resides in the cytoplasm. It localises to the preautophagosomal structure membrane. Its function is as follows. Autophagy-specific protein that functions with ATG13, ATG29, and CIS1/ATG31 in response to autophagy-inducing signals as a scaffold to recruit other ATG proteins to organize pre-autophagosomal structure (PAS) formation. Modulates the timing and magnitude of the autophagy response, such as the size of the sequestering vesicles, through interacting with and regulating ATG1 kinase activity. Plays particularly a role in pexophagy and nucleophagy. With ATG13, is required for ATG1 activation by autophosphorylation. Recruits ATG9 to the pre-autophagosomal structure. This is Autophagy-related protein 17 from Kluyveromyces marxianus (strain DMKU3-1042 / BCC 29191 / NBRC 104275) (Yeast).